The primary structure comprises 396 residues: Argininosuccinate synthase (396 aa).

9–17 contacts ATP; sequence AFSGGLDTT. Tyr-86 lines the L-citrulline pocket. Gly-116 is a binding site for ATP. Residues Thr-118, Asn-122, and Asp-123 each contribute to the L-aspartate site. Asn-122 is a binding site for L-citrulline. Positions 126, 172, 181, 254, and 266 each coordinate L-citrulline.

This sequence belongs to the argininosuccinate synthase family. Type 1 subfamily. In terms of assembly, homotetramer.

It localises to the cytoplasm. The catalysed reaction is L-citrulline + L-aspartate + ATP = 2-(N(omega)-L-arginino)succinate + AMP + diphosphate + H(+). It participates in amino-acid biosynthesis; L-arginine biosynthesis; L-arginine from L-ornithine and carbamoyl phosphate: step 2/3. The sequence is that of Argininosuccinate synthase from Halobacterium salinarum (strain ATCC 700922 / JCM 11081 / NRC-1) (Halobacterium halobium).